Reading from the N-terminus, the 67-residue chain is Vespin (67 aa).

Positions 1–21 (MHPIIWELSHMVDLQAAAQKL) are cleaved as a signal peptide.

Expressed by the venom gland.

The protein resides in the secreted. In terms of biological role, shows contractile activity on isolated ileum smooth muscle. The chain is Vespin from Vespa magnifica (Hornet).